A 90-amino-acid polypeptide reads, in one-letter code: Genome polyprotein (90 aa).

This sequence belongs to the potyviridae genome polyprotein family. In terms of processing, genome polyprotein of potyviruses undergoes post-translational proteolytic processing by the main proteinase NIa-pro resulting in the production of at least ten individual proteins. The P1 proteinase and the HC-pro cleave only their respective C-termini autocatalytically. 6K1 is essential for proper proteolytic separation of P3 from CI.

Its subcellular location is the virion. In terms of biological role, involved in aphid transmission, cell-to-cell and systemis movement, encapsidation of the viral RNA and in the regulation of viral RNA amplification. The protein is Genome polyprotein of Gloriosa stripe mosaic virus (GSMV).